The sequence spans 580 residues: Laccase-20 (580 aa).

The N-terminal stretch at 1–23 is a signal peptide; that stretch reads MVASLLCTVAVAVLAVAAVGGEA. 2 consecutive Plastocyanin-like domains span residues 31–147 and 156–310; these read VVHE…PRDG and KDVP…YTSA. N-linked (GlcNAc...) asparagine glycans are attached at residues Asn-36 and Asn-42. Cu cation is bound by residues His-81 and His-83. Asn-115 carries N-linked (GlcNAc...) asparagine glycosylation. Positions 126 and 128 each coordinate Cu cation. Asn-200, Asn-339, Asn-392, Asn-429, and Asn-460 each carry an N-linked (GlcNAc...) asparagine glycan. A Plastocyanin-like 3 domain is found at 419 to 561; the sequence is DFPVRPPRPY…ATAFIVEDGP (143 aa). 8 residues coordinate Cu cation: Asn-478, His-481, His-483, His-540, Cys-541, His-542, His-546, and Met-551. Residues 560–580 are disordered; it reads GPTPETSLPPPPPEFKRCDAS.

It belongs to the multicopper oxidase family. Cu cation serves as cofactor.

The protein resides in the secreted. It is found in the extracellular space. Its subcellular location is the apoplast. The enzyme catalyses 4 hydroquinone + O2 = 4 benzosemiquinone + 2 H2O. Functionally, lignin degradation and detoxification of lignin-derived products. The protein is Laccase-20 (LAC20) of Oryza sativa subsp. indica (Rice).